The sequence spans 105 residues: L-rhamnose mutarotase (105 aa).

Y19 is a substrate binding site. Catalysis depends on H23, which acts as the Proton donor. Substrate-binding positions include Y42 and 77–78; that span reads WW.

It belongs to the rhamnose mutarotase family. In terms of assembly, homodimer.

It localises to the cytoplasm. The catalysed reaction is alpha-L-rhamnose = beta-L-rhamnose. It functions in the pathway carbohydrate metabolism; L-rhamnose metabolism. Functionally, involved in the anomeric conversion of L-rhamnose. In Mesorhizobium japonicum (strain LMG 29417 / CECT 9101 / MAFF 303099) (Mesorhizobium loti (strain MAFF 303099)), this protein is L-rhamnose mutarotase.